A 379-amino-acid chain; its full sequence is Glutamate 5-kinase (379 aa).

K19 contacts ATP. Residues S59, D146, and N158 each contribute to the substrate site. Residues T178–D179 and T220–K226 contribute to the ATP site. Residues S285 to D363 enclose the PUA domain.

The protein belongs to the glutamate 5-kinase family.

Its subcellular location is the cytoplasm. It carries out the reaction L-glutamate + ATP = L-glutamyl 5-phosphate + ADP. It functions in the pathway amino-acid biosynthesis; L-proline biosynthesis; L-glutamate 5-semialdehyde from L-glutamate: step 1/2. Functionally, catalyzes the transfer of a phosphate group to glutamate to form L-glutamate 5-phosphate. This chain is Glutamate 5-kinase, found in Vibrio vulnificus (strain YJ016).